A 213-amino-acid chain; its full sequence is Calcineurin B-like protein 8 (213 aa).

Residue G2 is the site of N-myristoyl glycine attachment. EF-hand domains lie at 31-66, 67-102, 104-139, and 148-183; these read EVEA…RNSN, KKNL…FHPE, PLGD…LLNE, and AVEQ…NPAL. Ca(2+) is bound by residues D161, N163, D165, K167, and E172.

This sequence belongs to the calcineurin regulatory subunit family. In terms of assembly, homodimer. As to expression, expressed at low levels in roots, shoots, culms, leaves and young spikelets.

Its subcellular location is the cell membrane. In terms of biological role, acts as a calcium sensor. May function as positive regulator of salt stress responses. CBL proteins interact with CIPK serine-threonine protein kinases. Binding of a CBL protein to the regulatory NAF domain of a CIPK protein lead to the activation of the kinase in a calcium-dependent manner. This Oryza sativa subsp. japonica (Rice) protein is Calcineurin B-like protein 8 (CBL8).